The primary structure comprises 60 residues: U-actitoxin-Avd12b (60 aa).

A signal peptide spans 1–6 (SKEGMS). Positions 7-12 (YEEPEN) are excised as a propeptide. Residues 14–56 (EGVACTGQYAESFCLNGGTCRYIQSIGEYYCICVGDYTGHRCE) enclose the EGF-like domain. 3 disulfides stabilise this stretch: Cys-18–Cys-33, Cys-27–Cys-44, and Cys-46–Cys-55.

The protein belongs to the EGF domain peptide family.

The protein resides in the secreted. It is found in the nematocyst. Functionally, has both toxic and EGF activity. Its EGF activity consists of rounding cells (morphological change) and inducing tyrosine phosphorylation of the EGFR in A431 cells, but with a lower potency that human EGF. The protein is U-actitoxin-Avd12b of Anemonia viridis (Snakelocks anemone).